Here is a 487-residue protein sequence, read N- to C-terminus: MSALIEKSLTEIHAMLMTKEVTATEAVKACLEQIAKSEPETKALLHICNDEALKQAEEMDAAGPDASKPLWGVPVVIKDALATNGIPTTAGSKILEGFTPFYDSTAVAKLKEAGAIIVGKANMDEFAMGSTTENSAYQTTTNPWDASRVPGGSSGGSGATVAAGQCYAALGTDTGGSIRLPASFCGCVGVKPTYGRVSRYGMIAYGSSLDQIGPMTRTVEDAARVLNVIGGHDQRDSTSAEQPMEDFVAALEERKDLSGLTIGLPEEYWGEGLSKEVSEACRAAIAKAEELGAKTVPVKLSMTEYAIATYYIIAMAEASSNLSRFDGVRYGHRTEDPKELAELYTKSRTEAFGDEVQRRIIIGTYVLSAGYYDAYYRKAAQIRRLLREDFNKAFESCDIIASPACPTTAFPVGELTSDPLQMYLQDIFTISLNLVGMPGMSLPVAFGKETNMPVGLQFMAPAFDEKTMLQAAHVLEKNLPELPKVKL.

Residue Lys-78 is the Charge relay system of the active site. Positions 135-144 (SAYQTTTNPW) are enriched in polar residues. Residues 135–155 (SAYQTTTNPWDASRVPGGSSG) are disordered. Ser-153 serves as the catalytic Charge relay system. The active-site Acyl-ester intermediate is Ser-177.

The protein belongs to the amidase family. GatA subfamily. As to quaternary structure, heterotrimer of A, B and C subunits.

The catalysed reaction is L-glutamyl-tRNA(Gln) + L-glutamine + ATP + H2O = L-glutaminyl-tRNA(Gln) + L-glutamate + ADP + phosphate + H(+). Its function is as follows. Allows the formation of correctly charged Gln-tRNA(Gln) through the transamidation of misacylated Glu-tRNA(Gln) in organisms which lack glutaminyl-tRNA synthetase. The reaction takes place in the presence of glutamine and ATP through an activated gamma-phospho-Glu-tRNA(Gln). The chain is Glutamyl-tRNA(Gln) amidotransferase subunit A from Maridesulfovibrio salexigens (strain ATCC 14822 / DSM 2638 / NCIMB 8403 / VKM B-1763) (Desulfovibrio salexigens).